We begin with the raw amino-acid sequence, 439 residues long: Histidine--tRNA ligase (439 aa).

This sequence belongs to the class-II aminoacyl-tRNA synthetase family. As to quaternary structure, homodimer.

Its subcellular location is the cytoplasm. It catalyses the reaction tRNA(His) + L-histidine + ATP = L-histidyl-tRNA(His) + AMP + diphosphate + H(+). The sequence is that of Histidine--tRNA ligase from Clostridium tetani (strain Massachusetts / E88).